The chain runs to 51 residues: Large ribosomal subunit protein bL33 (51 aa).

The segment at 1–21 (MRDKIKLESSAGTGHFYTTTK) is disordered. The segment covering 10–20 (SAGTGHFYTTT) has biased composition (polar residues).

This sequence belongs to the bacterial ribosomal protein bL33 family.

This chain is Large ribosomal subunit protein bL33 (rpmG), found in Neisseria meningitidis serogroup A / serotype 4A (strain DSM 15465 / Z2491).